Reading from the N-terminus, the 360-residue chain is Phospho-N-acetylmuramoyl-pentapeptide-transferase (360 aa).

10 consecutive transmembrane segments (helical) span residues 27–47, 71–91, 94–114, 132–152, 168–188, 199–219, 236–256, 263–283, 288–308, and 338–358; these read IVSL…MIAF, TPTM…LLWV, NNPY…VGFV, WKYF…YSFG, VMPQ…VGTS, GLAI…AWAT, AGEL…FLWF, VFMG…IAVL, FLLV…ILQV, and VIVR…ATLK.

This sequence belongs to the glycosyltransferase 4 family. MraY subfamily. Mg(2+) is required as a cofactor.

It localises to the cell inner membrane. It catalyses the reaction UDP-N-acetyl-alpha-D-muramoyl-L-alanyl-gamma-D-glutamyl-meso-2,6-diaminopimeloyl-D-alanyl-D-alanine + di-trans,octa-cis-undecaprenyl phosphate = di-trans,octa-cis-undecaprenyl diphospho-N-acetyl-alpha-D-muramoyl-L-alanyl-D-glutamyl-meso-2,6-diaminopimeloyl-D-alanyl-D-alanine + UMP. It functions in the pathway cell wall biogenesis; peptidoglycan biosynthesis. Its function is as follows. Catalyzes the initial step of the lipid cycle reactions in the biosynthesis of the cell wall peptidoglycan: transfers peptidoglycan precursor phospho-MurNAc-pentapeptide from UDP-MurNAc-pentapeptide onto the lipid carrier undecaprenyl phosphate, yielding undecaprenyl-pyrophosphoryl-MurNAc-pentapeptide, known as lipid I. The chain is Phospho-N-acetylmuramoyl-pentapeptide-transferase from Photorhabdus laumondii subsp. laumondii (strain DSM 15139 / CIP 105565 / TT01) (Photorhabdus luminescens subsp. laumondii).